A 165-amino-acid polypeptide reads, in one-letter code: Short form salivary protein D7R4 (165 aa).

A signal peptide spans 1–21 (MIRQVITSYFLTVCLLALVQG). 3 cysteine pairs are disulfide-bonded: cysteine 27–cysteine 59, cysteine 40–cysteine 165, and cysteine 98–cysteine 117. Residues glutamate 28 and arginine 43 each contribute to the noradrenaline site. Glutamate 28 contacts serotonin. 4 residues coordinate serotonin: histidine 56, tyrosine 115, aspartate 132, and glutamate 135. Histamine is bound by residues tyrosine 115, aspartate 132, and glutamate 135. Tryptamine-binding residues include tyrosine 115, aspartate 132, and glutamate 135. Aspartate 132 and glutamate 135 together coordinate noradrenaline.

Belongs to the PBP/GOBP family. In terms of tissue distribution, female saliva (at protein level). Female salivary gland. Not detected in female carcass without salivary glands. Not detected in male tissues.

Its subcellular location is the secreted. Modulates blood feeding of female mosquitoes on vertebrate species by binding and sequestering different mediators involved in the host response. Binds serotonin, noradrenaline, histamine and tryptamine. Inhibits histamine-, serotonin- and partially noradrenaline-induced smooth muscle contraction. Exhibits vasodilating activity. The protein is Short form salivary protein D7R4 of Anopheles gambiae (African malaria mosquito).